We begin with the raw amino-acid sequence, 296 residues long: 4-diphosphocytidyl-2-C-methyl-D-erythritol kinase (296 aa).

Lysine 19 is a catalytic residue. 102–112 is a binding site for ATP; sequence PMGAGLGGGSS. Aspartate 144 is an active-site residue.

Belongs to the GHMP kinase family. IspE subfamily.

The catalysed reaction is 4-CDP-2-C-methyl-D-erythritol + ATP = 4-CDP-2-C-methyl-D-erythritol 2-phosphate + ADP + H(+). Its pathway is isoprenoid biosynthesis; isopentenyl diphosphate biosynthesis via DXP pathway; isopentenyl diphosphate from 1-deoxy-D-xylulose 5-phosphate: step 3/6. In terms of biological role, catalyzes the phosphorylation of the position 2 hydroxy group of 4-diphosphocytidyl-2C-methyl-D-erythritol. The chain is 4-diphosphocytidyl-2-C-methyl-D-erythritol kinase from Burkholderia pseudomallei (strain 1710b).